The sequence spans 543 residues: MKRTRSALPANFDPVYPYDAPKPSTQPPFFNDRKGLTESSPGTLAVNISPPLTFSNLGAIKLSTGAGLILKEGKLEANIGPGLTTNQEGQITVEKDSDGLTFTSPLHKIENTVSLSIGEGLEDESGTLKVNFPSPPPPLLFSPPLAEAGGTVSLPLQESMQVTEGKLGVKPTTYSPPLQKTDQQVSLRVGPGLTVLNGQLQAVQPPATTYKEPLLETENSVSLKVGAGLAVQDGALVATPPNVTFSAPLEKNGNAVSVRVGAGLSIQGNALVATTSPTLTFAYPLIKNNNHITLSAGSGLRVSGGSLTVATGPGLSHINGTIAAVIGAGLKFENNAILAKLGNGLTIRDGAIEAVAPQPSFTPVTLWTGPDPNVNTSINGTPVIRSFISLTRDSNLVTVNASFTGEGSYQSVSPTQSQFSLILEFNQFGQLMSTGNLNSTTTWGEKPWGNNTVQVQPSHTWKLCMPNREVYSTPAATLTSCGLNSIAHDGAPNRSIDCMLIINKLAGAATYTLTFRFLNFNKLSSSTVFKTDVLTFTYVGENQ.

A disordered region spans residues 1–36 (MKRTRSALPANFDPVYPYDAPKPSTQPPFFNDRKGL).

The protein belongs to the adenoviridae fiber family. In terms of assembly, homotrimer. Interacts (via N-terminal tail region) with pentons.

It is found in the virion. Its subcellular location is the host nucleus. Its function is as follows. Forms spikes that protrude from each vertex of the icosahedral capsid. Interacts with host receptor to provide virion initial attachment to target cell. Fiber proteins are shed during virus entry, when virus is still at the cell surface. The sequence is that of Fiber protein from Canine adenovirus serotype 1 (strain RI261) (CAdV-1).